We begin with the raw amino-acid sequence, 76 residues long: Virulence-associated protein VagC (76 aa).

Residues 4-45 (VSIFKNGNNRAIRLPRDLDFEGVSELEIVREGDSIILRPVRP) form the SpoVT-AbrB domain.

This sequence belongs to the VapB family.

The polypeptide is Virulence-associated protein VagC (vagC) (Salmonella dublin).